Reading from the N-terminus, the 399-residue chain is Acetate kinase (399 aa).

Residue Asn-7 coordinates Mg(2+). Lys-14 contacts ATP. Arg-91 is a substrate binding site. Asp-148 (proton donor/acceptor) is an active-site residue. ATP-binding positions include 208-212 (HLGNG) and 283-285 (DFR). Glu-384 contributes to the Mg(2+) binding site.

It belongs to the acetokinase family. As to quaternary structure, homodimer. Mg(2+) serves as cofactor. Mn(2+) is required as a cofactor.

The protein localises to the cytoplasm. The enzyme catalyses acetate + ATP = acetyl phosphate + ADP. The protein operates within metabolic intermediate biosynthesis; acetyl-CoA biosynthesis; acetyl-CoA from acetate: step 1/2. Its function is as follows. Catalyzes the formation of acetyl phosphate from acetate and ATP. Can also catalyze the reverse reaction. The sequence is that of Acetate kinase from Dictyoglomus thermophilum (strain ATCC 35947 / DSM 3960 / H-6-12).